A 348-amino-acid chain; its full sequence is Dihydroorotase (348 aa).

2 residues coordinate Zn(2+): His17 and His19. Substrate contacts are provided by residues 19 to 21 (HLR) and Asn45. Lys103, His140, and His178 together coordinate Zn(2+). Lys103 carries the N6-carboxylysine modification. A substrate-binding site is contributed by His140. Substrate is bound at residue Leu223. Asp251 lines the Zn(2+) pocket. The active site involves Asp251. Residues His255 and Ala267 each coordinate substrate.

Belongs to the metallo-dependent hydrolases superfamily. DHOase family. Class II DHOase subfamily. As to quaternary structure, homodimer. The cofactor is Zn(2+).

The enzyme catalyses (S)-dihydroorotate + H2O = N-carbamoyl-L-aspartate + H(+). It functions in the pathway pyrimidine metabolism; UMP biosynthesis via de novo pathway; (S)-dihydroorotate from bicarbonate: step 3/3. Catalyzes the reversible cyclization of carbamoyl aspartate to dihydroorotate. The protein is Dihydroorotase of Yersinia pseudotuberculosis serotype I (strain IP32953).